The primary structure comprises 471 residues: Glutamate--tRNA ligase (471 aa).

Residues 9–19 carry the 'HIGH' region motif; that stretch reads PSPTGYLHVGG. Zn(2+) is bound by residues C98, C100, C125, and D127. Residues 237–241 carry the 'KMSKS' region motif; that stretch reads KLSKR. Residue K240 coordinates ATP.

This sequence belongs to the class-I aminoacyl-tRNA synthetase family. Glutamate--tRNA ligase type 1 subfamily. In terms of assembly, monomer. The cofactor is Zn(2+).

The protein localises to the cytoplasm. The catalysed reaction is tRNA(Glu) + L-glutamate + ATP = L-glutamyl-tRNA(Glu) + AMP + diphosphate. Its function is as follows. Catalyzes the attachment of glutamate to tRNA(Glu) in a two-step reaction: glutamate is first activated by ATP to form Glu-AMP and then transferred to the acceptor end of tRNA(Glu). The sequence is that of Glutamate--tRNA ligase from Yersinia pestis.